Here is a 326-residue protein sequence, read N- to C-terminus: Isopenicillin N synthase (326 aa).

Arg84, Tyr88, and Tyr186 together coordinate isopenicillin N. Residues Arg84, Tyr88, Tyr186, His209, and Asp211 each coordinate N-[(5S)-5-amino-5-carboxypentanoyl]-L-cysteinyl-D-valine. Positions Leu183–Leu283 constitute a Fe2OG dioxygenase domain. Fe(2+) is bound by residues His209, Asp211, and His265. Arg274 contacts 2-oxoglutarate. Ser276 provides a ligand contact to isopenicillin N. N-[(5S)-5-amino-5-carboxypentanoyl]-L-cysteinyl-D-valine is bound at residue Ser276.

The protein belongs to the iron/ascorbate-dependent oxidoreductase family. It depends on Fe cation as a cofactor. L-ascorbate is required as a cofactor.

The catalysed reaction is N-[(5S)-5-amino-5-carboxypentanoyl]-L-cysteinyl-D-valine + O2 = isopenicillin N + 2 H2O. It functions in the pathway antibiotic biosynthesis; penicillin G biosynthesis; penicillin G from L-alpha-aminoadipate and L-cysteine and L-valine: step 2/3. Removes, in the presence of oxygen, 4 hydrogen atoms from delta-L-(alpha-aminoadipyl)-L-cysteinyl-D-valine (ACV) to form the azetidinone and thiazolidine rings of isopenicillin. The protein is Isopenicillin N synthase (pcbC) of Flavobacterium sp. (strain SC 12,154).